The sequence spans 407 residues: Zinc finger protein 260 (407 aa).

3 disordered regions span residues 1–21 (MLES…PGES), 39–72 (VEHK…HLRS), and 96–124 (SHQK…RNQR). The segment at 23 to 45 (YECNECKETFSLEQNFVEHKKTH) adopts a C2H2-type 1 zinc-finger fold. Composition is skewed to basic and acidic residues over residues 39-51 (VEHK…EKSP) and 100-111 (QHTEERPSESKK). The segment at 51–73 (PECTGCGEESSQASSLTLHLRSR) adopts a C2H2-type 2; degenerate zinc-finger fold. The segment at 79 to 101 (YKCGECGKAFSQRGNFLSHQKQH) adopts a C2H2-type 3 zinc-finger fold. Residues 115-124 (PMTTTVRNQR) are compositionally biased toward polar residues. 10 C2H2-type zinc fingers span residues 131–153 (YACK…EKIH), 159–181 (FECS…QNIH), 187–209 (FKCN…QRIH), 215–237 (YECK…QRSH), 243–265 (YTCK…EKIH), 271–293 (YKCN…HNIH), 299–321 (YECN…VRIH), 327–349 (YECK…MRSH), 355–377 (YGCN…MRIH), and 383–405 (YQCS…QRIH).

The protein belongs to the krueppel C2H2-type zinc-finger protein family. Binds DNA. Interacts with GATA4. In terms of tissue distribution, predominantly present in heart. Outside the heart, it is detected in embryonic and postnatal vascular smooth muscle cells and in epithelial cells of the lung, gut and kidney at sites of epithelial morphogenesis and in the spinal cord (at protein level).

It localises to the nucleus. Its function is as follows. Transcription factor that acts as a cardiac regulator and an effector of alpha1-adrenergic signaling. Binds to PE response elements (PERE) present in the promoter of genes such as ANF/NPPA and acts as a direct transcriptional activator of NPPA. Also acts as a cofactor with GATA4, a key cardiac regulator. The sequence is that of Zinc finger protein 260 (Znf260) from Mus musculus (Mouse).